A 67-amino-acid chain; its full sequence is Large ribosomal subunit protein bL35 (67 aa).

Positions 1-20 are disordered; it reads MPKLKTKSGAKKRFVPKKSG.

This sequence belongs to the bacterial ribosomal protein bL35 family.

This Anaeromyxobacter dehalogenans (strain 2CP-1 / ATCC BAA-258) protein is Large ribosomal subunit protein bL35.